A 556-amino-acid chain; its full sequence is 2-succinyl-5-enolpyruvyl-6-hydroxy-3-cyclohexene-1-carboxylate synthase (556 aa).

The protein belongs to the TPP enzyme family. MenD subfamily. In terms of assembly, homodimer. Mg(2+) is required as a cofactor. Requires Mn(2+) as cofactor. It depends on thiamine diphosphate as a cofactor.

It catalyses the reaction isochorismate + 2-oxoglutarate + H(+) = 5-enolpyruvoyl-6-hydroxy-2-succinyl-cyclohex-3-ene-1-carboxylate + CO2. Its pathway is quinol/quinone metabolism; 1,4-dihydroxy-2-naphthoate biosynthesis; 1,4-dihydroxy-2-naphthoate from chorismate: step 2/7. It functions in the pathway quinol/quinone metabolism; menaquinone biosynthesis. In terms of biological role, catalyzes the thiamine diphosphate-dependent decarboxylation of 2-oxoglutarate and the subsequent addition of the resulting succinic semialdehyde-thiamine pyrophosphate anion to isochorismate to yield 2-succinyl-5-enolpyruvyl-6-hydroxy-3-cyclohexene-1-carboxylate (SEPHCHC). The chain is 2-succinyl-5-enolpyruvyl-6-hydroxy-3-cyclohexene-1-carboxylate synthase from Salmonella paratyphi C (strain RKS4594).